We begin with the raw amino-acid sequence, 563 residues long: Serine/threonine-protein kinase WNK8 (563 aa).

One can recognise a Protein kinase domain in the interval 29–286 (IRYDDVLGRG…ALELSKDPFL (258 aa)). Residues 109–112 (TELF) and Lys-159 contribute to the ATP site. The Proton acceptor role is filled by Asp-176. Positions 426 to 436 (TSSHHNQNSPR) are enriched in polar residues. The segment at 426 to 459 (TSSHHNQNSPRLTHEDHEAANQQTVNSKDEEAAG) is disordered. Position 509 is a phosphoserine (Ser-509).

It belongs to the protein kinase superfamily. Ser/Thr protein kinase family. WNK subfamily. Interacts with RGS1 and GB1, but not with GPA1. The association with RGS1 at the plasma membrane is triggered by induction of glucose. Binds to EDM2 in nucleus. Autophosphorylated.

The protein resides in the nucleus. It catalyses the reaction L-seryl-[protein] + ATP = O-phospho-L-seryl-[protein] + ADP + H(+). It carries out the reaction L-threonyl-[protein] + ATP = O-phospho-L-threonyl-[protein] + ADP + H(+). In terms of biological role, regulates flowering time by modulating the photoperiod pathway. Phosphorylates the vacuolar ATPase subunit C (VATC) and RGS1. Regulates EDM2 that, in turn, modulates development processes. This chain is Serine/threonine-protein kinase WNK8 (WNK8), found in Arabidopsis thaliana (Mouse-ear cress).